The sequence spans 858 residues: Heat shock protein 105 kDa (858 aa).

S2 is modified (N-acetylserine). Position 471 is an N6-acetyllysine (K471). Disordered regions lie at residues 500 to 584 (KVPT…PPEA) and 796 to 858 (CEPV…MDLD). Residues 504-514 (EENEMSSEADM) are compositionally biased toward acidic residues. Phosphoserine is present on residues S509 and S510. Residues 532–554 (QQDNSEAGTQPQVQTDAQQTSQS) show a composition bias toward polar residues. S557 bears the Phosphoserine mark. Residue T561 is modified to Phosphothreonine. Composition is skewed to basic and acidic residues over residues 563–584 (EENK…PPEA) and 805–814 (PKIESPKLER). S809 is modified (phosphoserine). T815 is subject to Phosphothreonine. Residues 821 to 832 (IDKKEEDLEDKN) show a composition bias toward basic and acidic residues. The segment covering 849–858 (EKNSVNMDLD) has biased composition (polar residues).

This sequence belongs to the heat shock protein 70 family. In terms of assembly, interacts with HSPA8/HSC70. Interacts with HSPA1A (via NBD) and HSPA1B (via NBD). Post-translationally, phosphorylation on Ser-509 may be important for regulation of the HSPA8/HSC70 chaperone activity.

It is found in the cytoplasm. Acts as a nucleotide-exchange factor (NEF) for chaperone proteins HSPA1A and HSPA1B, promoting the release of ADP from HSPA1A/B thereby triggering substrate release. Prevents the aggregation of denatured proteins in cells under severe stress, on which the ATP levels decrease markedly. Inhibits HSPA8/HSC70 ATPase and chaperone activities. The protein is Heat shock protein 105 kDa (HSPH1) of Pongo abelii (Sumatran orangutan).